Reading from the N-terminus, the 179-residue chain is Natural killer cells antigen CD94 (179 aa).

At 1 to 10 the chain is on the cytoplasmic side; the sequence is MAVFKTTLWR. A helical; Signal-anchor for type II membrane protein transmembrane segment spans residues 11 to 31; that stretch reads LISGTLGIICLSLMSTLGILL. At 32-179 the chain is on the extracellular side; that stretch reads KNSFTKLSIE…NRYICKQQLI (148 aa). 2 disulfide bridges follow: Cys-58–Cys-70 and Cys-61–Cys-72. The 108-residue stretch at 68–175 folds into the C-type lectin domain; sequence YRCNCYFISS…CEDKNRYICK (108 aa). 2 N-linked (GlcNAc...) asparagine glycosylation sites follow: Asn-83 and Asn-132. Cystine bridges form between Cys-89/Cys-174 and Cys-152/Cys-166.

In terms of assembly, can form disulfide-bonded heterodimer with NKG2 family members KLRC1 and KLRC2. KLRD1-KLRC1 heterodimer interacts with peptide-bound HLA-E-B2M heterotrimeric complex. KLRD1 plays a prominent role in directly interacting with HLA-E. KLRD1-KLRC1 interacts with much higher affinity with peptide-bound HLA-E-B2M than KLRD1-KLRC2. Interacts with the adapter protein TYROBP/DAP12; this interaction is required for cell surface expression and cell activation. In terms of tissue distribution, expressed in NK cell subsets (at protein level). Expressed in memory/effector CD8-positive alpha-beta T cell subsets (at protein level). Expressed in melanoma-specific cytotoxic T cell clones (at protein level). Expressed in terminally differentiated cytotoxic gamma-delta T cells (at protein level). KLRD1-KLRC1 and KLRD1-KLRC2 are differentially expressed in NK and T cell populations, with only minor subsets expressing both receptor complexes (at protein level).

It localises to the cell membrane. Functionally, immune receptor involved in self-nonself discrimination. In complex with KLRC1 or KLRC2 on cytotoxic and regulatory lymphocyte subsets, recognizes non-classical major histocompatibility (MHC) class Ib molecule HLA-E loaded with self-peptides derived from the signal sequence of classical MHC class Ia and non-classical MHC class Ib molecules. Enables cytotoxic cells to monitor the expression of MHC class I molecules in healthy cells and to tolerate self. Primarily functions as a ligand binding subunit as it lacks the capacity to signal. Its function is as follows. KLRD1-KLRC1 acts as an immune inhibitory receptor. Key inhibitory receptor on natural killer (NK) cells that regulates their activation and effector functions. Dominantly counteracts T cell receptor signaling on a subset of memory/effector CD8-positive T cells as part of an antigen-driven response to avoid autoimmunity. On intraepithelial CD8-positive gamma-delta regulatory T cells triggers TGFB1 secretion, which in turn limits the cytotoxic programming of intraepithelial CD8-positive alpha-beta T cells, distinguishing harmless from pathogenic antigens. In HLA-E-rich tumor microenvironment, acts as an immune inhibitory checkpoint and may contribute to progressive loss of effector functions of NK cells and tumor-specific T cells, a state known as cell exhaustion. Upon HLA-E-peptide binding, transmits intracellular signals through KLRC1 immunoreceptor tyrosine-based inhibition motifs (ITIMs) by recruiting INPP5D/SHIP-1 and INPPL1/SHIP-2 tyrosine phosphatases to ITIMs, and ultimately opposing signals transmitted by activating receptors through dephosphorylation of proximal signaling molecules. In terms of biological role, KLRD1-KLRC2 acts as an immune activating receptor. On cytotoxic lymphocyte subsets recognizes HLA-E loaded with signal sequence-derived peptides from non-classical MHC class Ib HLA-G molecules, likely playing a role in the generation and effector functions of adaptive NK cells and in maternal-fetal tolerance during pregnancy. Regulates the effector functions of terminally differentiated cytotoxic lymphocyte subsets, and in particular may play a role in adaptive NK cell response to viral infection. Upon HLA-E-peptide binding, transmits intracellular signals via the adapter protein TYROBP/DAP12, triggering the phosphorylation of proximal signaling molecules and cell activation. (Microbial infection) Viruses like human cytomegalovirus have evolved an escape mechanism whereby virus-induced down-regulation of host MHC class I molecules is coupled to the binding of viral peptides to HLA-E, restoring HLA-E expression and inducing HLA-E-dependent NK cell immune tolerance to infected cells. Recognizes HLA-E in complex with human cytomegalovirus UL40-derived peptide (VMAPRTLIL) and inhibits NK cell cytotoxicity. Functionally, (Microbial infection) May recognize HLA-E in complex with HIV-1 gag/Capsid protein p24-derived peptide (AISPRTLNA) on infected cells and may inhibit NK cell cytotoxicity, a mechanism that allows HIV-1 to escape immune recognition. Its function is as follows. (Microbial infection) Upon SARS-CoV-2 infection, may contribute to functional exhaustion of cytotoxic NK cells and CD8-positive T cells. On NK cells, may recognize HLA-E in complex with SARS-CoV-2 S/Spike protein S1-derived peptide (LQPRTFLL) expressed on the surface of lung epithelial cells, inducing NK cell exhaustion and dampening antiviral immune surveillance. The protein is Natural killer cells antigen CD94 (KLRD1) of Homo sapiens (Human).